Consider the following 180-residue polypeptide: Pro-glucagon (180 aa).

The first 20 residues, 1–20 (MKSIYFVAGLFVMLVQGSWQ), serve as a signal peptide directing secretion. Positions 23–56 (LQDTEEKPRSFSTSQTDLLDDPDQMNEDKRHSQG) are disordered. Residue Ser54 is modified to Phosphoserine. The propeptide occupies 84–89 (NRNEIA). A phosphoserine mark is found at Ser105 and Ser108. Arg127 carries the arginine amide modification. Residues 131-145 (DFPEEVTIVEELRRR) constitute a propeptide that is removed on maturation. Phosphoserine occurs at positions 150 and 152.

It belongs to the glucagon family. Post-translationally, proglucagon is post-translationally processed in a tissue-specific manner in pancreatic A cells and intestinal L cells. In pancreatic A cells, the major bioactive hormone is glucagon cleaved by PCSK2/PC2. In the intestinal L cells PCSK1/PC1 liberates GLP-1, GLP-2, glicentin and oxyntomodulin. GLP-1 is further N-terminally truncated by post-translational processing in the intestinal L cells resulting in GLP-1(7-37) GLP-1-(7-36)amide. The C-terminal amidation is neither important for the metabolism of GLP-1 nor for its effects on the endocrine pancreas. In terms of tissue distribution, glucagon is secreted in the A cells of the islets of Langerhans. GLP-1, GLP-2, oxyntomodulin and glicentin are secreted from enteroendocrine cells throughout the gastrointestinal tract. GLP-1 and GLP-2 are also secreted in selected neurons in the brain.

It is found in the secreted. Its function is as follows. Plays a key role in glucose metabolism and homeostasis. Regulates blood glucose by increasing gluconeogenesis and decreasing glycolysis. A counterregulatory hormone of insulin, raises plasma glucose levels in response to insulin-induced hypoglycemia. Plays an important role in initiating and maintaining hyperglycemic conditions in diabetes. In terms of biological role, potent stimulator of glucose-dependent insulin release. Also stimulates insulin release in response to IL6. Plays important roles on gastric motility and the suppression of plasma glucagon levels. May be involved in the suppression of satiety and stimulation of glucose disposal in peripheral tissues, independent of the actions of insulin. Has growth-promoting activities on intestinal epithelium. May also regulate the hypothalamic pituitary axis (HPA) via effects on LH, TSH, CRH, oxytocin, and vasopressin secretion. Increases islet mass through stimulation of islet neogenesis and pancreatic beta cell proliferation. Inhibits beta cell apoptosis. Functionally, stimulates intestinal growth and up-regulates villus height in the small intestine, concomitant with increased crypt cell proliferation and decreased enterocyte apoptosis. The gastrointestinal tract, from the stomach to the colon is the principal target for GLP-2 action. Plays a key role in nutrient homeostasis, enhancing nutrient assimilation through enhanced gastrointestinal function, as well as increasing nutrient disposal. Stimulates intestinal glucose transport and decreases mucosal permeability. Significantly reduces food intake. Inhibits gastric emptying in humans. Suppression of gastric emptying may lead to increased gastric distension, which may contribute to satiety by causing a sensation of fullness. Its function is as follows. May modulate gastric acid secretion and the gastro-pyloro-duodenal activity. May play an important role in intestinal mucosal growth in the early period of life. In Octodon degus (Degu), this protein is Pro-glucagon (GCG).